An 89-amino-acid chain; its full sequence is Large ribosomal subunit protein bL31B (89 aa).

Belongs to the bacterial ribosomal protein bL31 family. Type B subfamily. As to quaternary structure, part of the 50S ribosomal subunit.

The protein is Large ribosomal subunit protein bL31B of Actinobacillus pleuropneumoniae serotype 5b (strain L20).